Consider the following 302-residue polypeptide: Mitochondrial glycine transporter (302 aa).

Solcar repeat units lie at residues 22 to 112, 119 to 203, and 213 to 297; these read HPVF…LKHH, PKPL…AKKL, and FSPV…MMEK. Transmembrane regions (helical) follow at residues 28–53, 87–113, 125–150, 178–201, 217–243, and 272–290; these read FVCGSLSGTCSTLLFQPLDLVKTRLQ, GVSPSFLRCIPGVGLYFSTLYTLKHHF, VMLGAGSRTVAAVCMLPFTVVKTRYE, GLTATLMRDAPFSGIYLMFYTRAK, LNFGCGIVAGILASVATQPADVIKTHI, and GGLPRALRRTLMAAMAWTV.

The protein belongs to the mitochondrial carrier (TC 2.A.29) family. SLC25A38 subfamily.

The protein localises to the mitochondrion inner membrane. It carries out the reaction glycine(in) = glycine(out). In terms of biological role, mitochondrial glycine transporter that imports glycine into the mitochondrial matrix. Plays an important role in providing glycine for the first enzymatic step in heme biosynthesis, the condensation of glycine with succinyl-CoA to produce 5-aminolevulinate (ALA) in the mitochondrial matrix. Required during erythropoiesis. Its function is as follows. May play a role as pro-apoptotic protein that induces caspase-dependent apoptosis. The chain is Mitochondrial glycine transporter from Xenopus tropicalis (Western clawed frog).